The following is a 454-amino-acid chain: Chromosomal replication initiator protein DnaA (454 aa).

Positions 1–76 are domain I, interacts with DnaA modulators; that stretch reads MNKLKTDLNL…IGASFRILAK (76 aa). Residues 76–113 form a domain II region; the sequence is KNPKIIFAQESPGNGEKATGKKIKSLPREDKSSIFESK. The interval 114-330 is domain III, AAA+ region; sequence GLNTKFSFEN…GALNRLCAYA (217 aa). ATP is bound by residues Gly158, Gly160, Lys161, and Thr162. The tract at residues 331-454 is domain IV, binds dsDNA; it reads SIHKEGKITL…KITEQLTSSQ (124 aa).

This sequence belongs to the DnaA family. In terms of assembly, oligomerizes as a right-handed, spiral filament on DNA at oriC.

It is found in the cytoplasm. Functionally, plays an essential role in the initiation and regulation of chromosomal replication. ATP-DnaA binds to the origin of replication (oriC) to initiate formation of the DNA replication initiation complex once per cell cycle. Binds the DnaA box (a 9 base pair repeat at the origin) and separates the double-stranded (ds)DNA. Forms a right-handed helical filament on oriC DNA; dsDNA binds to the exterior of the filament while single-stranded (ss)DNA is stabiized in the filament's interior. The ATP-DnaA-oriC complex binds and stabilizes one strand of the AT-rich DNA unwinding element (DUE), permitting loading of DNA polymerase. After initiation quickly degrades to an ADP-DnaA complex that is not apt for DNA replication. Binds acidic phospholipids. The protein is Chromosomal replication initiator protein DnaA of Methylacidiphilum infernorum (isolate V4) (Methylokorus infernorum (strain V4)).